Consider the following 195-residue polypeptide: Mannitol operon repressor (195 aa).

This sequence belongs to the MtlR/FumE family. In terms of assembly, homodimer. Can also form higher level multimer aggregates.

Functionally, involved in the repression of the expression of the mannitol mtlADR operon. Does not bind the operator/promoter regulatory region of this operon. Therefore, seems to belong to a new class of transcription factors in bacteria that may regulate gene expression indirectly, perhaps as a part of a larger transcriptional complex. In Escherichia coli O6:H1 (strain CFT073 / ATCC 700928 / UPEC), this protein is Mannitol operon repressor.